Here is a 316-residue protein sequence, read N- to C-terminus: Ornithine carbamoyltransferase (316 aa).

Carbamoyl phosphate-binding positions include 59 to 62 (STRT), Q86, R110, and 137 to 140 (HPCQ). L-ornithine contacts are provided by residues N168, D232, and 236 to 237 (SM). Residues 273–274 (CL) and R301 contribute to the carbamoyl phosphate site.

Belongs to the aspartate/ornithine carbamoyltransferase superfamily. OTCase family.

The protein localises to the cytoplasm. It carries out the reaction carbamoyl phosphate + L-ornithine = L-citrulline + phosphate + H(+). It functions in the pathway amino-acid biosynthesis; L-arginine biosynthesis; L-arginine from L-ornithine and carbamoyl phosphate: step 1/3. In terms of biological role, reversibly catalyzes the transfer of the carbamoyl group from carbamoyl phosphate (CP) to the N(epsilon) atom of ornithine (ORN) to produce L-citrulline. This Listeria monocytogenes serovar 1/2a (strain ATCC BAA-679 / EGD-e) protein is Ornithine carbamoyltransferase (argF).